Here is a 676-residue protein sequence, read N- to C-terminus: A-type ATP synthase subunit I (676 aa).

The next 8 helical transmembrane spans lie at 341 to 361, 390 to 410, 449 to 469, 490 to 510, 538 to 558, 564 to 584, 590 to 610, and 617 to 637; these read VFIA…IGYG, AGVM…PFIV, ILLF…FALG, IIGV…VGVF, LNVY…LFVM, MGAM…QIMS, AIGL…MKLI, and IPIV…ILGI.

This sequence belongs to the V-ATPase 116 kDa subunit family. Has multiple subunits with at least A(3), B(3), C, D, E, F, H, I and proteolipid K(x).

The protein localises to the cell membrane. Component of the A-type ATP synthase that produces ATP from ADP in the presence of a proton gradient across the membrane. The polypeptide is A-type ATP synthase subunit I (Archaeoglobus fulgidus (strain ATCC 49558 / DSM 4304 / JCM 9628 / NBRC 100126 / VC-16)).